Reading from the N-terminus, the 185-residue chain is Ribosome-recycling factor (185 aa).

It belongs to the RRF family.

Its subcellular location is the cytoplasm. Functionally, responsible for the release of ribosomes from messenger RNA at the termination of protein biosynthesis. May increase the efficiency of translation by recycling ribosomes from one round of translation to another. This Methylobacillus flagellatus (strain ATCC 51484 / DSM 6875 / VKM B-1610 / KT) protein is Ribosome-recycling factor.